The primary structure comprises 196 residues: Nodulation protein A (196 aa).

Belongs to the NodA family.

The protein localises to the cytoplasm. N-acyltransferase required for nodulation. Acts in the production of a small, heat-stable compound (Nod) that stimulates mitosis in various plant protoplasts. The protein is Nodulation protein A of Mesorhizobium plurifarium.